Reading from the N-terminus, the 388-residue chain is Dual specificity mitogen-activated protein kinase kinase 1 (388 aa).

Positions Pro-1–Glu-20 are disordered. The Protein kinase domain occupies Phe-61–Ile-356. ATP-binding positions include Leu-67–Val-75 and Lys-90. Asp-183 acts as the Proton acceptor in catalysis. Residues Ser-211 and Ser-215 each carry the phosphoserine; by RAF modification. A disordered region spans residues Asp-275–Ser-299.

The protein belongs to the protein kinase superfamily. STE Ser/Thr protein kinase family. MAP kinase kinase subfamily. MAPKK is itself dependent on Ser/Thr phosphorylation for activity catalyzed by MAP kinase kinase kinases (RAF or MEKK1).

It localises to the cytoplasm. Its subcellular location is the cytoskeleton. The protein localises to the microtubule organizing center. The protein resides in the centrosome. It is found in the spindle pole body. It localises to the nucleus. It catalyses the reaction L-seryl-[protein] + ATP = O-phospho-L-seryl-[protein] + ADP + H(+). It carries out the reaction L-threonyl-[protein] + ATP = O-phospho-L-threonyl-[protein] + ADP + H(+). The catalysed reaction is L-tyrosyl-[protein] + ATP = O-phospho-L-tyrosyl-[protein] + ADP + H(+). Its function is as follows. Dual specificity protein kinase which acts as an essential component of the MAP kinase signal transduction pathway. Binding of extracellular ligands such as growth factors, cytokines and hormones to their cell-surface receptors activates RAS and this initiates RAF1 activation. RAF1 then further activates the dual-specificity protein kinases MAP2K1/MEK1 and MAP2K2/MEK2. Both MAP2K1/MEK1 and MAP2K2/MEK2 function specifically in the MAPK/ERK cascade, and catalyze the concomitant phosphorylation of a threonine and a tyrosine residue in a Thr-Glu-Tyr sequence located in the extracellular signal-regulated kinases MAPK3/ERK1 and MAPK1/ERK2, leading to their activation and further transduction of the signal within the MAPK/ERK cascade. Depending on the cellular context, this pathway mediates diverse biological functions such as cell growth, adhesion, survival and differentiation predominantly through the regulation of transcription, metabolism and cytoskeletal rearrangements. The sequence is that of Dual specificity mitogen-activated protein kinase kinase 1 (MAP2K1) from Serinus canaria (Island canary).